Here is a 211-residue protein sequence, read N- to C-terminus: Ribosomal RNA small subunit methyltransferase G (211 aa).

Residues G81, L86, A132 to E133, and R147 each bind S-adenosyl-L-methionine.

The protein belongs to the methyltransferase superfamily. RNA methyltransferase RsmG family.

The protein resides in the cytoplasm. It carries out the reaction guanosine(527) in 16S rRNA + S-adenosyl-L-methionine = N(7)-methylguanosine(527) in 16S rRNA + S-adenosyl-L-homocysteine. Functionally, specifically methylates the N7 position of guanine in position 527 of 16S rRNA. The polypeptide is Ribosomal RNA small subunit methyltransferase G (Dichelobacter nodosus (strain VCS1703A)).